Reading from the N-terminus, the 261-residue chain is Small ribosomal subunit protein mS23 (261 aa).

A disordered region spans residues 233–261 (RASSPSASWTNETEEEQKPIDQDVEEIQL).

Belongs to the mitochondrion-specific ribosomal protein mS23 family. As to quaternary structure, component of the mitochondrial small ribosomal subunit.

The protein resides in the mitochondrion. This Kluyveromyces lactis (strain ATCC 8585 / CBS 2359 / DSM 70799 / NBRC 1267 / NRRL Y-1140 / WM37) (Yeast) protein is Small ribosomal subunit protein mS23 (RSM25).